Here is a 316-residue protein sequence, read N- to C-terminus: tRNA pseudouridine synthase B (316 aa).

Catalysis depends on Asp47, which acts as the Nucleophile.

Belongs to the pseudouridine synthase TruB family. Type 1 subfamily.

The enzyme catalyses uridine(55) in tRNA = pseudouridine(55) in tRNA. Its function is as follows. Responsible for synthesis of pseudouridine from uracil-55 in the psi GC loop of transfer RNAs. The chain is tRNA pseudouridine synthase B from Aliivibrio fischeri (strain ATCC 700601 / ES114) (Vibrio fischeri).